Reading from the N-terminus, the 1250-residue chain is DNA topoisomerase 3-alpha (1250 aa).

Residues 27–171 (KYLNVAEKND…NISVYRATFS (145 aa)) enclose the Toprim domain. The region spanning 189-610 (DKRQSDAVDV…EQIAKYKQAY (422 aa)) is the Topo IA-type catalytic domain. The active-site O-(5'-phospho-DNA)-tyrosine intermediate is Y356. Gly residues predominate over residues 769–835 (RGGGGGPGPG…GTGGGGLGGG (67 aa)). 2 disordered regions span residues 769–899 (RGGG…GLDE) and 953–1035 (NGGT…TVLC). Over residues 840 to 865 (PGGESKKSATKKPPNEPKPKKTKEPK) the composition is skewed to basic and acidic residues. The span at 866 to 886 (AAPNKKTSSKSSGSIRSFFTS) shows a compositional bias: low complexity. Polar residues predominate over residues 956–965 (TMPTESNGDQ). Composition is skewed to basic and acidic residues over residues 966–994 (QLDK…RERA) and 1012–1021 (PRWDSVERDS). The span at 1022-1033 (TPPSSVPESETV) shows a compositional bias: low complexity. The Zn(2+) site is built by C1035, C1038, C1061, and C1067. Residues 1035–1076 (CTGCQQPARQNTVRKNGPNLGRLYYKCPKPDECNFFQWADEP) form a GRF-type 1 zinc finger. Positions 1069–1150 (FFQWADEPPS…TATPGDGEEV (82 aa)) are disordered. Positions 1079–1101 (SAKSKNSTGSAPQSTTSWGSNRV) are enriched in polar residues. The segment covering 1106–1134 (SIQQSNSQRGQSSMRSNSSSTVTITQTKT) has biased composition (low complexity). The Zn(2+) site is built by C1152, C1154, C1177, and C1184. A GRF-type 2 zinc finger spans residues 1152 to 1193 (CNCGQLASQLTVRKDGPNQGRPFYACPTREKSCGFFKWGDED). The interval 1188-1231 (KWGDEDQNQGASSTSWGSANRNPPGRSQPTAITSDGPKTRRCGL) is disordered. Over residues 1195 to 1220 (NQGASSTSWGSANRNPPGRSQPTAIT) the composition is skewed to polar residues.

This sequence belongs to the type IA topoisomerase family.

It carries out the reaction ATP-independent breakage of single-stranded DNA, followed by passage and rejoining.. Releases the supercoiling and torsional tension of DNA introduced during the DNA replication and transcription by transiently cleaving and rejoining one strand of the DNA duplex. Introduces a single-strand break via transesterification at a target site in duplex DNA. The scissile phosphodiester is attacked by the catalytic tyrosine of the enzyme, resulting in the formation of a DNA-(5'-phosphotyrosyl)-enzyme intermediate and the expulsion of a 3'-OH DNA strand. The free DNA strand than undergoes passage around the unbroken strand thus removing DNA supercoils. Finally, in the religation step, the DNA 3'-OH attacks the covalent intermediate to expel the active-site tyrosine and restore the DNA phosphodiester backbone. Weakly relaxes negative supercoils and displays a distinct preference for binding single-stranded DNA. The polypeptide is DNA topoisomerase 3-alpha (Top3alpha) (Drosophila melanogaster (Fruit fly)).